The chain runs to 94 residues: Putative testis-specific prion protein (94 aa).

Residues 1 to 18 (MQHSLVFFFAVILHLSHL) form the signal peptide. N-linked (GlcNAc...) asparagine glycosylation is present at N44.

Specifically expressed in adult testis.

The protein resides in the secreted. The sequence is that of Putative testis-specific prion protein (PRNT) from Homo sapiens (Human).